The sequence spans 396 residues: 2-methyl-aconitate isomerase (396 aa).

Substrate is bound by residues S19 and 66–70; that span reads SSTSK. C104 acts as the Proton donor/acceptor in catalysis. Cysteine sulfinic acid (-SO2H) is present on C104. The substrate site is built by N106, K278, S309, and H314. M318 (proton donor/acceptor) is an active-site residue. G319 is a substrate binding site.

Belongs to the PrpF family. In terms of assembly, homodimer.

The enzyme catalyses 2-methyl-trans-aconitate = 2-methyl-cis-aconitate. It participates in organic acid metabolism; propanoate degradation. Its function is as follows. Catalyzes the isomerization of 2-methyl-trans-aconitate to yield 2-methyl-cis-aconitate through a base-catalyzed proton abstraction coupled with a rotation about C2-C3 bond of 2-methyl-aconitate. The chain is 2-methyl-aconitate isomerase from Cupriavidus necator (Alcaligenes eutrophus).